A 413-amino-acid chain; its full sequence is Tyrosine--tRNA ligase (413 aa).

Residues 59-68 (PTAPDIHLGH) carry the 'HIGH' region motif. The 'KMSKS' region signature appears at 243 to 247 (KMSKS). Lys-246 is an ATP binding site. Residues 351 to 411 (LAIGQLLKQA…GKRRFARVTL (61 aa)) enclose the S4 RNA-binding domain.

It belongs to the class-I aminoacyl-tRNA synthetase family. TyrS type 2 subfamily. Homodimer.

It is found in the cytoplasm. It catalyses the reaction tRNA(Tyr) + L-tyrosine + ATP = L-tyrosyl-tRNA(Tyr) + AMP + diphosphate + H(+). Its function is as follows. Catalyzes the attachment of tyrosine to tRNA(Tyr) in a two-step reaction: tyrosine is first activated by ATP to form Tyr-AMP and then transferred to the acceptor end of tRNA(Tyr). The polypeptide is Tyrosine--tRNA ligase (Burkholderia mallei (strain ATCC 23344)).